We begin with the raw amino-acid sequence, 61 residues long: Small ribosomal subunit protein uS14 (61 aa).

Residues Cys-24, Cys-27, Cys-40, and Cys-43 each coordinate Zn(2+).

It belongs to the universal ribosomal protein uS14 family. Zinc-binding uS14 subfamily. In terms of assembly, part of the 30S ribosomal subunit. Contacts proteins S3 and S10. Requires Zn(2+) as cofactor.

Functionally, binds 16S rRNA, required for the assembly of 30S particles and may also be responsible for determining the conformation of the 16S rRNA at the A site. This Anoxybacillus flavithermus (strain DSM 21510 / WK1) protein is Small ribosomal subunit protein uS14.